A 2104-amino-acid chain; its full sequence is Phenolphthiocerol synthesis polyketide synthase type I Pks15/1 (2104 aa).

The region spanning 41 to 464 (TEPVAVVGIG…GTNAHVILEE (424 aa)) is the Ketosynthase family 3 (KS3) domain. Active-site for beta-ketoacyl synthase activity residues include C211, H346, and H386. Positions 571–887 (TAVVFPGQGS…GQLFSTGMSV (317 aa)) are acyltransferase. The active-site For acyltransferase activity is S662. The interval 935-1057 (HALLGAVVER…GMLGVEAASS (123 aa)) is N-terminal hotdog fold. The dehydratase stretch occupies residues 935 to 1095 (HALLGAVVER…YAYGPGFQGL (161 aa)). Residues 935–1207 (HALLGAVVER…TRAMSAAQLR (273 aa)) enclose the PKS/mFAS DH domain. The active-site Proton acceptor; for dehydratase activity is the H967. The segment at 1069–1207 (AESVDISDGY…TRAMSAAQLR (139 aa)) is C-terminal hotdog fold. D1128 serves as the catalytic Proton donor; for dehydratase activity. Residues 1400–1705 (GTLEDLVIEP…QARHIGKVVL (306 aa)) form an enoylreductase region. NADP(+) is bound by residues 1530–1547 (VLIH…VQLA) and 1719–1734 (TVLI…AVLA). Positions 1718-1899 (ATVLITGATG…SVAWGLWEQS (182 aa)) are beta-ketoacyl reductase (KR). The region spanning 2004–2079 (DALVGLVCLQ…AIAEYVGRQI (76 aa)) is the Carrier domain. An O-(pantetheine 4'-phosphoryl)serine modification is found at S2039. The disordered stretch occupies residues 2081 to 2104 (DSQATQAEEEKLPESDGEMVSVTA).

It belongs to the thiolase-like superfamily. Beta-ketoacyl-ACP synthases family. Pantetheine 4'-phosphate is required as a cofactor.

The enzyme catalyses a fatty acyl-[ACP] + malonyl-[ACP] + H(+) = a 3-oxoacyl-[ACP] + holo-[ACP] + CO2. Its pathway is lipid metabolism; fatty acid biosynthesis. Catalyzes the elongation by iterative transfer of p-hydroxybenzoyl group from FadD22 (pHBA-S-FAdD22) to form p-hydroxyphenylalkanoate (pHPA) intermediates during phenolphthiocerol (PPOL) biosynthesis. PPOL is an important intermediate in the biosynthesis of phenolic glycolipid (mycosid B). The polypeptide is Phenolphthiocerol synthesis polyketide synthase type I Pks15/1 (pks15/1) (Mycobacterium marinum (strain ATCC BAA-535 / M)).